Here is a 112-residue protein sequence, read N- to C-terminus: Integration host factor subunit alpha (112 aa).

The protein belongs to the bacterial histone-like protein family. In terms of assembly, heterodimer of an alpha and a beta chain.

This protein is one of the two subunits of integration host factor, a specific DNA-binding protein that functions in genetic recombination as well as in transcriptional and translational control. The polypeptide is Integration host factor subunit alpha (Rhizobium etli (strain CIAT 652)).